Here is a 1059-residue protein sequence, read N- to C-terminus: MMTLQMDKTTASSSWERAKSIYDEIAELANKRQKAGNPPDPNLLQLLREKYEAIILESHTFSEQHNIEIPLWQLHYKRIEYFRLHINRVLASSTSTAAQNVKGPSKAEQIAQLKLQFRTFLSEATGFYHDMILKIRSKYGLPLGSFSEDQQSQNLSDKDGKELAEVQKALKSCHRCLIYLGDLARYKGMYAEGDSRSRQYASASSYYLQAASLWPASGNPHHQLAIVASYSRDEFVTTYRYFRSLAVEYPFPTARDNLIVAFDKNRQSYEKLFVPSKDSSKRLTGKGRGKGADISLKDATLVAGPEKDKVTIANEMLKAFSIRFVHLNGILFTRTSLETFFDVLASTSSSLREVISLGSAKELTLGIDTSDSALFIVRVVTMLIFSVHNSKKETEGQSYAEIVQRVEPARNSLTASFELLGLVIEKCVQLGDPSSSYFLPGVLVFVEWLACCPDIALGSDPDDRQTAVRNSFWNQFVVFFNQVLSLGPTFIDDVEDETCFSNMSLYDERETENRLALWEDYELRGFLPLLPAQTILNFSRKHSFGTEGPKEKKARIKRIFAAGKALTSVIKVDQNHVYFDSKKKKFLVGVKPADDFLDSHSSPPKACNALQDNQVMIDHNSPIMQLDQQIYMGEEDDDDEVIVFKPLVTEKRKEASDQIYVPSGGFRKSDQVTTMGDFKALSGSDVAFHENQILQARGNASIQVPASVGANLLGPLQPSTQSQAMHMQQVQTQVQVPASVGANLLGLLLTSTQSQAMHMQQVQTQAVNPQPAQSLAASRLQPIQSQVAQPLPSRVVHFQQTQAQVSHVSPAHSQSTSFGGGSKWSPEEAASLASSLSGFAQLGNGHVMRNEMQGNHGVSYYPAHSLPVHQSYNGNGMGGMPYSQSRTPEAVFPPKIDPVLSSGVVADGLGVQSSLAKKNPISRAFRHLGPPPGFNSVPAKLQKEPAPGSELSGNNHLPVDDYSWLDGYQAQSSRGVGLNSSLNYATSGKPEHLGSTGNGLNGPANFPFPGKQVPTSQVQADFPYFQNPQKDNFVDKNHQSTQLPEQYQGQSTWSSRHFV.

TPR repeat units follow at residues 149 to 183 (DQQS…LGDL) and 184 to 217 (ARYK…WPAS). Over residues 806 to 817 (SHVSPAHSQSTS) the composition is skewed to polar residues. 4 disordered regions span residues 806 to 826 (SHVS…KWSP), 927 to 955 (HLGP…SGNN), 987 to 1015 (SGKP…QVPT), and 1040 to 1059 (STQL…RHFV).

Interacts with EXA1. Expressed in flowers and at lower levels in stems and leaves.

Its subcellular location is the cytoplasm. The protein localises to the P-body. In terms of biological role, plays multiple roles in growth and development. Involved in nonsense-mediated mRNA decay (NMD). May provide a link to the mRNA degradation machinery to initiate NMD and serve as an adapter for UPF proteins function. Required for meiotic progression through anaphase II of pollen mother cells. May counteract cyclin-dependent kinase (CDK) activity at the end of meiosis. May play a role in plant defense through its involvement in NMD. Together with EXA1, helps to restrict cell death induction during pathogen infection in a salicylic acid- (SA) and reactive oxygen species- (ROS) independent manner. The polypeptide is Nonsense-mediated mRNA decay factor SMG7 (Arabidopsis thaliana (Mouse-ear cress)).